Here is a 2026-residue protein sequence, read N- to C-terminus: Fatty acid synthase subunit beta (2026 aa).

Positions 148–526 (ILMAFGGQGS…VDGRGVRIIA (379 aa)) are acetyltransferase (AT) domain. The For acetyltransferase activity role is filled by Ser268. Residues 579-824 (SQLLQAPPII…LILAAAGVAD (246 aa)) are enoyl reductase (ER) domain. Residues 1130–1604 (SQVTGSVRSA…LPGDQLTVRI (475 aa)) form a dehydratase (DH) domain region. In terms of domain architecture, MaoC-like spans 1512 to 1625 (PGLIDNGSRT…LSVAAYREGT (114 aa)). The tract at residues 1643–2016 (YLFTGQGSQA…LEEAAAVTGS (374 aa)) is malonyl/palmitoyl transferase (MT/PT) domain. Ser1788 acts as the For malonyltransferase activity in catalysis.

This sequence belongs to the fungal fatty acid synthetase subunit beta family. As to quaternary structure, [Alpha(6)beta(6)] hexamers of two multifunctional subunits (alpha and beta).

It carries out the reaction acetyl-CoA + n malonyl-CoA + 2n NADPH + 4n H(+) = a long-chain-acyl-CoA + n CoA + n CO2 + 2n NADP(+).. The catalysed reaction is holo-[ACP] + acetyl-CoA = acetyl-[ACP] + CoA. It catalyses the reaction holo-[ACP] + malonyl-CoA = malonyl-[ACP] + CoA. The enzyme catalyses a (3R)-hydroxyacyl-[ACP] = a (2E)-enoyl-[ACP] + H2O. It carries out the reaction a 2,3-saturated acyl-[ACP] + NAD(+) = a (2E)-enoyl-[ACP] + NADH + H(+). The catalysed reaction is (9Z)-octadecenoyl-[ACP] + H2O = (9Z)-octadecenoate + holo-[ACP] + H(+). It functions in the pathway secondary metabolite biosynthesis. In terms of biological role, fatty acid synthase beta subunit; part of the gene cluster that mediates the biosynthesis of oryzines, natural products with an unusual maleidride backbone. The two subunits of the fungal fatty acid synthase oryfasA and oryfasB probably form octenoic acid. This fatty acid is most likely activated by the acyl-CoA ligase oryP to give octenyl-CoA before the citrate synthase-like protein oryE catalyzes condensation with oxaloacetate to form tricarboxylic acid. The next steps of the pathways are conjectural, but a favorite possible route has been proposed, beginning with decarboxylation and concomitant dehydration by the decarboxylase oryM, followed by tautomerization, which may lead to the production of a diene intermediate. Reduction of this diene intermediate could give the known metabolite piliformic acid. On the pathway to oryzine B and oryzine A, however, hydroxylation of the diene by the alpha-ketoglutarate-dependent dioxygenase oryG and lactonisation by the lactonohydrolases oryH or oryL could give oryzine B directly. Finally, enoyl reduction by the dehydrogenase oryD would then convert oryzine B into oryzine A. This Aspergillus oryzae (strain ATCC 42149 / RIB 40) (Yellow koji mold) protein is Fatty acid synthase subunit beta.